Consider the following 562-residue polypeptide: Urocanate hydratase (562 aa).

NAD(+) contacts are provided by residues 52–53 (GG), Gln-130, 176–178 (GMG), Glu-196, Arg-201, 242–243 (NA), 263–267 (QTSAH), 273–274 (YL), and Tyr-322. Cys-410 is an active-site residue. Residue Gly-492 coordinates NAD(+).

Belongs to the urocanase family. NAD(+) serves as cofactor.

The protein resides in the cytoplasm. The catalysed reaction is 4-imidazolone-5-propanoate = trans-urocanate + H2O. It functions in the pathway amino-acid degradation; L-histidine degradation into L-glutamate; N-formimidoyl-L-glutamate from L-histidine: step 2/3. Functionally, catalyzes the conversion of urocanate to 4-imidazolone-5-propionate. This is Urocanate hydratase from Shewanella pealeana (strain ATCC 700345 / ANG-SQ1).